The primary structure comprises 341 residues: D-aspartate oxidase (341 aa).

Positions 36, 37, 43, 44, 50, 307, 311, and 312 each coordinate FAD. The Microbody targeting signal motif lies at 339-341 (SKL).

It belongs to the DAMOX/DASOX family. In terms of assembly, tetramer. Interacts with PEX5; the interaction is direct and required for localization of DDO to the peroxisome. FAD serves as cofactor. In terms of tissue distribution, expressed in liver and kidney (at protein level). In the brain, expressed in the frontal, temporal, and occipital lobes of the cortex, hippocampus, striatum, diencephalon, brainstem, cerebellum, spinal cord, plexus choroiderus and ependyma (at protein level). Also expressed in the lung, muscle, heart, spleen, small intestine and testis (at protein level).

The protein resides in the peroxisome matrix. It localises to the cytoplasm. Its subcellular location is the cytosol. It catalyses the reaction D-aspartate + O2 + H2O = oxaloacetate + H2O2 + NH4(+). The catalysed reaction is D-glutamate + O2 + H2O = H2O2 + 2-oxoglutarate + NH4(+). Its activity is regulated as follows. Inhibited by aminooxyacetic acid, malonate, meso-tartrate and potassium bromide. Its function is as follows. Selectively catalyzes the oxidative deamination of acidic amino acids. Suppresses the level of D-aspartate in the brain, an amino acid that can act as an agonist for glutamate receptors. Protects the organism from the toxicity of D-amino acids. May also function in the intestine. The polypeptide is D-aspartate oxidase (Rattus norvegicus (Rat)).